A 411-amino-acid chain; its full sequence is MSGGIMDEEIEIPPFFLCPISLEIMKDPVIVSTGITYDRDSIEKWLFAGKKNSCPVTKQDITDADLTPNHTLRRLIQSWCTLNASYGVERIPTPRPPICKSEIEKLIRDSASSHENQVKCLKRLRQIVSENATNKRCLEAAGVPEFLANIVSNDSENGSLTDEALNLLYHLETSETVLKNLLNNKKDNNIVKSLTKIMQRGMYESRVYATLLLKNILEVADPMQSMTLKPEVFTEVVQILDDRISQKATKAAMHILVNICPWGRNRHKAVEAGVISVIIELLMDESFTSERRGPEMAMVVLDLLCQCAEGRAEFLNHGAAIAVVCKKILRVSQTASDRAVRVLLSVGRFCATPALLHEMLQLGVVAKLCLVLQVSCGGKTKEKAKELLKLHARVWKDSPCLPKNMILAYPC.

Residues 11 to 86 enclose the U-box domain; it reads EIPPFFLCPI…QSWCTLNASY (76 aa). ARM repeat units follow at residues 132–173, 175–203, 221–261, and 263–306; these read ATNK…HLET, ETVLKNLLNNKKDNNIVKSLTKIMQRGMY, DPMQ…NICP, and GRNR…LLCQ.

Interacts with RPN12A. Auto-ubiquitinated.

The protein resides in the cytoplasm. The catalysed reaction is S-ubiquitinyl-[E2 ubiquitin-conjugating enzyme]-L-cysteine + [acceptor protein]-L-lysine = [E2 ubiquitin-conjugating enzyme]-L-cysteine + N(6)-ubiquitinyl-[acceptor protein]-L-lysine.. Its pathway is protein modification; protein ubiquitination. In terms of biological role, E3 ubiquitin-protein ligase that negatively regulates water stress response. May control in coordination with PUB23 a drought signaling pathway by ubiquitinating cytosolic RPN12a. Acts as a negative regulator of the immunity triggered by the pathogen-associated molecular patterns (PAMPs), in association with PUB22 and PUB24. This chain is E3 ubiquitin-protein ligase PUB23 (PUB23), found in Arabidopsis thaliana (Mouse-ear cress).